The sequence spans 213 residues: 3-dehydroquinate dehydratase (213 aa).

3-dehydroquinate is bound by residues 27–29 (EVR) and Arg53. The active-site Proton donor/acceptor is the His111. Lys138 functions as the Schiff-base intermediate with substrate in the catalytic mechanism. 3-dehydroquinate is bound by residues Arg175 and Gln197.

It belongs to the type-I 3-dehydroquinase family. Homodimer.

It carries out the reaction 3-dehydroquinate = 3-dehydroshikimate + H2O. It functions in the pathway metabolic intermediate biosynthesis; chorismate biosynthesis; chorismate from D-erythrose 4-phosphate and phosphoenolpyruvate: step 3/7. Involved in the third step of the chorismate pathway, which leads to the biosynthesis of aromatic amino acids. Catalyzes the cis-dehydration of 3-dehydroquinate (DHQ) and introduces the first double bond of the aromatic ring to yield 3-dehydroshikimate. This is 3-dehydroquinate dehydratase from Thermococcus gammatolerans (strain DSM 15229 / JCM 11827 / EJ3).